Consider the following 128-residue polypeptide: Large ribosomal subunit protein uL22 (128 aa).

Belongs to the universal ribosomal protein uL22 family. As to quaternary structure, part of the 50S ribosomal subunit.

Functionally, this protein binds specifically to 23S rRNA; its binding is stimulated by other ribosomal proteins, e.g. L4, L17, and L20. It is important during the early stages of 50S assembly. It makes multiple contacts with different domains of the 23S rRNA in the assembled 50S subunit and ribosome. The globular domain of the protein is located near the polypeptide exit tunnel on the outside of the subunit, while an extended beta-hairpin is found that lines the wall of the exit tunnel in the center of the 70S ribosome. In Prochlorococcus marinus (strain AS9601), this protein is Large ribosomal subunit protein uL22.